A 131-amino-acid polypeptide reads, in one-letter code: Small ribosomal subunit protein uS8 (131 aa).

The protein belongs to the universal ribosomal protein uS8 family. As to quaternary structure, part of the 30S ribosomal subunit. Contacts proteins S5 and S12.

One of the primary rRNA binding proteins, it binds directly to 16S rRNA central domain where it helps coordinate assembly of the platform of the 30S subunit. This Burkholderia multivorans (strain ATCC 17616 / 249) protein is Small ribosomal subunit protein uS8.